A 229-amino-acid chain; its full sequence is 5'-methylthioadenosine/S-adenosylhomocysteine nucleosidase (229 aa).

E12 functions as the Proton acceptor in the catalytic mechanism. Substrate is bound by residues G78, I152, and 173-174 (ME). D197 (proton donor) is an active-site residue.

It belongs to the PNP/UDP phosphorylase family. MtnN subfamily.

The enzyme catalyses S-adenosyl-L-homocysteine + H2O = S-(5-deoxy-D-ribos-5-yl)-L-homocysteine + adenine. The catalysed reaction is S-methyl-5'-thioadenosine + H2O = 5-(methylsulfanyl)-D-ribose + adenine. It carries out the reaction 5'-deoxyadenosine + H2O = 5-deoxy-D-ribose + adenine. It participates in amino-acid biosynthesis; L-methionine biosynthesis via salvage pathway; S-methyl-5-thio-alpha-D-ribose 1-phosphate from S-methyl-5'-thioadenosine (hydrolase route): step 1/2. Catalyzes the irreversible cleavage of the glycosidic bond in both 5'-methylthioadenosine (MTA) and S-adenosylhomocysteine (SAH/AdoHcy) to adenine and the corresponding thioribose, 5'-methylthioribose and S-ribosylhomocysteine, respectively. Also cleaves 5'-deoxyadenosine, a toxic by-product of radical S-adenosylmethionine (SAM) enzymes, into 5-deoxyribose and adenine. In Haemophilus influenzae (strain PittEE), this protein is 5'-methylthioadenosine/S-adenosylhomocysteine nucleosidase.